We begin with the raw amino-acid sequence, 514 residues long: Probable peptidoglycan glycosyltransferase FtsW (514 aa).

9 consecutive transmembrane segments (helical) span residues 45–65, 86–106, 108–128, 137–157, 182–202, 218–238, 301–321, 347–367, and 373–393; these read IGLIIVALALMTIGIIIVTSA, IYIVGAIIAAMVVLELPMQFW, TANPYLLLAAIGLLVAVLLVG, WLALGPITIQAAEPAKLFFFT, VVFFALAMLLLLQPDLGTVVV, LWQFFALVFAGVLAVVALIVF, ILAEELGFVGVLAVLGLILWM, VGIWFSFQTAVNIGASAGILP, and LPLVSYGGSSLIVMSVAVALL. 2 disordered regions span residues 411–437 and 449–501; these read GDNKRTSKAKAKPSAKSAAKPAVRTKH and DYNQ…AGIK.

Belongs to the SEDS family. FtsW subfamily.

It localises to the cell inner membrane. It carries out the reaction [GlcNAc-(1-&gt;4)-Mur2Ac(oyl-L-Ala-gamma-D-Glu-L-Lys-D-Ala-D-Ala)](n)-di-trans,octa-cis-undecaprenyl diphosphate + beta-D-GlcNAc-(1-&gt;4)-Mur2Ac(oyl-L-Ala-gamma-D-Glu-L-Lys-D-Ala-D-Ala)-di-trans,octa-cis-undecaprenyl diphosphate = [GlcNAc-(1-&gt;4)-Mur2Ac(oyl-L-Ala-gamma-D-Glu-L-Lys-D-Ala-D-Ala)](n+1)-di-trans,octa-cis-undecaprenyl diphosphate + di-trans,octa-cis-undecaprenyl diphosphate + H(+). Its pathway is cell wall biogenesis; peptidoglycan biosynthesis. In terms of biological role, peptidoglycan polymerase that is essential for cell division. This chain is Probable peptidoglycan glycosyltransferase FtsW, found in Alteromonas naphthalenivorans.